Reading from the N-terminus, the 140-residue chain is Transcription antitermination protein NusB (140 aa).

The protein belongs to the NusB family.

Involved in transcription antitermination. Required for transcription of ribosomal RNA (rRNA) genes. Binds specifically to the boxA antiterminator sequence of the ribosomal RNA (rrn) operons. This Elusimicrobium minutum (strain Pei191) protein is Transcription antitermination protein NusB.